A 321-amino-acid chain; its full sequence is PI-PLC X domain-containing protein 3 (321 aa).

The 176-residue stretch at 22 to 197 folds into the PI-PLC X-box domain; that stretch reads SIHSIPLTNL…DYQVLVFYHS (176 aa). Residues His-37 and His-114 contribute to the active site.

As to expression, widely expressed, with highest levels in brain, followed by heart atrium. Not detected in small intestine, nor stomach.

It is found in the cytoplasm. This Mus musculus (Mouse) protein is PI-PLC X domain-containing protein 3 (Plcxd3).